The primary structure comprises 429 residues: Probable M18 family aminopeptidase 2 (429 aa).

Positions 82, 156, and 401 each coordinate Zn(2+).

It belongs to the peptidase M18 family. It depends on Zn(2+) as a cofactor.

The sequence is that of Probable M18 family aminopeptidase 2 from Stutzerimonas stutzeri (strain A1501) (Pseudomonas stutzeri).